We begin with the raw amino-acid sequence, 487 residues long: Lysophospholipid acyltransferase 5 (487 aa).

Alanine 2 carries the post-translational modification N-acetylalanine. A run of 6 helical transmembrane segments spans residues 44 to 64 (LIISIFLGYPFALFYRHYLFY), 84 to 104 (FNFGNQLYHSLLCIVLQFLIL), 111 to 131 (ITAVLTTFCFQMAYLLAGYYY), 180 to 200 (GVPSLLEVAGFSYFYGAFLVG), 227 to 247 (IIPALKRLSLGLFYLVGYTLL), and 285 to 305 (VTCWLVTEGVCILTGLGFNGF). Residues asparagine 338 and histidine 374 contribute to the active site. Transmembrane regions (helical) follow at residues 364-384 (GLSLLFLALWHGLHSGYLVCF), 422-442 (LVQQTIHWLFMGYSMTAFCLF), and 453-473 (SIYFLGHIFFLSLLFILPYIH). Residues 484-487 (KKME) carry the Di-lysine motif motif.

This sequence belongs to the membrane-bound acyltransferase family. Highly expressed in liver, pancreas and adipose tissue. Very low expression in skeletal muscle and heart. Detected in neutrophils.

The protein resides in the endoplasmic reticulum membrane. It carries out the reaction a 1-acyl-sn-glycero-3-phosphocholine + an acyl-CoA = a 1,2-diacyl-sn-glycero-3-phosphocholine + CoA. It catalyses the reaction a 1-acyl-sn-glycero-3-phosphoethanolamine + an acyl-CoA = a 1,2-diacyl-sn-glycero-3-phosphoethanolamine + CoA. The catalysed reaction is a 1-acyl-sn-glycero-3-phospho-L-serine + an acyl-CoA = a 1,2-diacyl-sn-glycero-3-phospho-L-serine + CoA. The enzyme catalyses (9Z,12Z)-octadecadienoyl-CoA + a 1-acyl-sn-glycero-3-phosphocholine = 1-acyl-2-(9Z,12Z)-octadecadienoyl-sn-glycero-3-phosphocholine + CoA. It carries out the reaction (5Z,8Z,11Z,14Z)-eicosatetraenoyl-CoA + a 1-acyl-sn-glycero-3-phosphocholine = 1-acyl-2-(5Z,8Z,11Z,14Z-eicosatetraenoyl)-sn-glycero-3-phosphocholine + CoA. It catalyses the reaction dodecanoyl-CoA + 1-hexadecanoyl-sn-glycero-3-phosphocholine = 1-hexadecanoyl-2-dodecanoyl-sn-glycero-3-phosphocholine + CoA. The catalysed reaction is octadecanoyl-CoA + 1-hexadecanoyl-sn-glycero-3-phosphocholine = 1-hexadecanoyl-2-octadecanoyl-sn-glycero-3-phosphocholine + CoA. The enzyme catalyses 1-dodecanoyl-sn-glycero-3-phosphocholine + hexadecanoyl-CoA = 1-dodecanoyl-2-hexadecanoyl-sn-glycero-3-phosphocholine + CoA. It carries out the reaction 1-tetradecanoyl-sn-glycero-3-phosphocholine + hexadecanoyl-CoA = 1-tetradecanoyl-2-hexadecanoyl-sn-glycero-3-phosphocholine + CoA. It catalyses the reaction 1-hexadecanoyl-sn-glycero-3-phosphocholine + hexadecanoyl-CoA = 1,2-dihexadecanoyl-sn-glycero-3-phosphocholine + CoA. The catalysed reaction is 1-octadecanoyl-sn-glycero-3-phosphocholine + hexadecanoyl-CoA = 1-octadecanoyl-2-hexadecanoyl-sn-glycero-3-phosphocholine + CoA. The enzyme catalyses 1-(9Z-octadecenoyl)-sn-glycero-3-phosphocholine + hexadecanoyl-CoA = 1-(9Z-octadecenoyl)-2-hexadecanoyl-sn-glycero-3-phosphocholine + CoA. It carries out the reaction (9Z)-hexadecenoyl-CoA + 1-hexadecanoyl-sn-glycero-3-phosphocholine = 1-hexadecanoyl-2-(9Z-hexadecenoyl)-sn-glycero-3-phosphocholine + CoA. It catalyses the reaction 1-hexadecanoyl-sn-glycero-3-phosphocholine + (9Z)-octadecenoyl-CoA = 1-hexadecanoyl-2-(9Z-octadecenoyl)-sn-glycero-3-phosphocholine + CoA. The catalysed reaction is (9Z,12Z)-octadecadienoyl-CoA + 1-hexadecanoyl-sn-glycero-3-phosphocholine = 1-hexadecanoyl-2-(9Z,12Z-octadecadienoyl)-sn-glycero-3-phosphocholine + CoA. The enzyme catalyses 1-dodecanoyl-sn-glycero-3-phosphocholine + (5Z,8Z,11Z,14Z)-eicosatetraenoyl-CoA = 1-dodecanoyl-2-(5Z,8Z,11Z,14Z)-eicosatetraenoyl-sn-glycero-3-phosphocholine + CoA. It carries out the reaction (5Z,8Z,11Z,14Z)-eicosatetraenoyl-CoA + 1-hexadecanoyl-sn-glycero-3-phosphocholine = 1-hexadecanoyl-2-(5Z,8Z,11Z,14Z-eicosatetraenoyl)-sn-glycero-3-phosphocholine + CoA. It catalyses the reaction 1-octadecanoyl-sn-glycero-3-phosphocholine + (5Z,8Z,11Z,14Z)-eicosatetraenoyl-CoA = 1-octadecanoyl-2-(5Z,8Z,11Z,14Z-eicosatetraenoyl)-sn-glycero-3-phosphocholine + CoA. The catalysed reaction is 1-eicosanoyl-sn-glycero-3-phosphocholine + (5Z,8Z,11Z,14Z)-eicosatetraenoyl-CoA = 1-eicosanoyl-2-(5Z,8Z,11Z,14Z)-eicosatetraenoyl-sn-glycero-3-phosphocholine + CoA. The enzyme catalyses 1-(9Z-octadecenoyl)-sn-glycero-3-phosphocholine + (9Z)-octadecenoyl-CoA = 1,2-di-(9Z-octadecenoyl)-sn-glycero-3-phosphocholine + CoA. It carries out the reaction 1-(9Z-octadecenoyl)-sn-glycero-3-phosphocholine + (9Z,12Z)-octadecadienoyl-CoA = 1-(9Z)-octadecenoyl-2-(9Z,12Z)-octadecadienoyl-sn-glycero-3-phosphocholine + CoA. It catalyses the reaction 1-(9Z-octadecenoyl)-sn-glycero-3-phosphocholine + (5Z,8Z,11Z,14Z)-eicosatetraenoyl-CoA = 1-(9Z)-octadecenoyl-2-(5Z,8Z,11Z,14Z)-icosatetraenoyl-sn-glycero-3-phosphocholine + CoA. The catalysed reaction is a 1-acyl-sn-glycero-3-phosphoethanolamine + (9Z,12Z)-octadecadienoyl-CoA = 1-acyl-2-(9Z,12Z)-octadecadienoyl-sn-glycero-3-phosphoethanolamine + CoA. The enzyme catalyses 1-(9Z-octadecenoyl)-sn-glycero-3-phosphoethanolamine + (9Z,12Z)-octadecadienoyl-CoA = 1-(9Z)-octadecenoyl-2-(9Z,12Z)-octadecadienoyl-sn-glycero-3-phosphoethanolamine + CoA. It carries out the reaction 1-(10Z-heptadecenoyl)-sn-glycero-3-phosphoethanolamine + (9Z,12Z)-octadecadienoyl-CoA = 1-(10Z-heptadecenoyl)-2-(9Z,12Z-octadecadienoyl)-sn-glycero-3-phosphoethanolamine + CoA. It catalyses the reaction a 1-acyl-sn-glycero-3-phosphoethanolamine + (5Z,8Z,11Z,14Z)-eicosatetraenoyl-CoA = 1-acyl-2-(5Z,8Z,11Z,14Z)-eicosatetraenoyl-sn-glycero-3-phosphoethanolamine + CoA. The catalysed reaction is 1-hexadecanoyl-sn-glycero-3-phosphoethanolamine + (5Z,8Z,11Z,14Z)-eicosatetraenoyl-CoA = 1-hexadecanoyl-2-(5Z,8Z,11Z,14Z-eicosatetraenoyl)-sn-glycero-3-phosphoethanolamine + CoA. The enzyme catalyses 1-(9Z-octadecenoyl)-sn-glycero-3-phosphoethanolamine + (5Z,8Z,11Z,14Z)-eicosatetraenoyl-CoA = 1-(9Z)-octadecenoyl-2-(5Z,8Z,11Z,14Z)-eicosatetraenoyl-sn-glycero-3-phosphoethanolamine + CoA. It carries out the reaction 1-(10Z-heptadecenoyl)-sn-glycero-3-phosphoethanolamine + (5Z,8Z,11Z,14Z)-eicosatetraenoyl-CoA = 1-(10Z-heptadecenoyl)-2-(5Z,8Z,11Z,14Z-eicosatetraenoyl)-sn-glycero-3-phosphoethanolamine + CoA. It catalyses the reaction a 1-O-(1Z-alkenyl)-sn-glycero-3-phosphoethanolamine + (5Z,8Z,11Z,14Z)-eicosatetraenoyl-CoA = 1-O-(1Z)-alkenyl-2-(5Z,8Z,11Z,14Z)-eicosatetraenoyl-sn-glycero-3-phosphoethanolamine + CoA. The catalysed reaction is a 1-acyl-sn-glycero-3-phospho-L-serine + (9Z,12Z)-octadecadienoyl-CoA = 1-acyl-2-(9Z,12Z-octadecadienoyl)-sn-glycero-3-phospho-L-serine + CoA. The enzyme catalyses a 1-acyl-sn-glycero-3-phospho-L-serine + (5Z,8Z,11Z,14Z)-eicosatetraenoyl-CoA = 1-acyl-2-(5Z,8Z,11Z,14Z-eicosatetraenoyl)-sn-glycero-3-phospho-L-serine + CoA. It carries out the reaction 1-hexadecanoyl-sn-glycero-3-phospho-L-serine + (9Z)-octadecenoyl-CoA = 1-hexadecanoyl-2-(9Z-octadecenoyl)-sn-glycero-3-phospho-L-serine + CoA. It catalyses the reaction 1-(9Z-octadecenoyl)-sn-glycero-3-phospho-L-serine + (9Z)-octadecenoyl-CoA = 1,2-di-(9Z)-octadecenoyl-sn-glycero-3-phospho-L-serine + CoA. The catalysed reaction is 1-hexadecanoyl-sn-glycero-3-phospho-L-serine + (9Z,12Z)-octadecadienoyl-CoA = 1-hexadecanoyl-2-(9Z,12Z-octadecadienoyl)-sn-glycero-3-phospho-L-serine + CoA. The enzyme catalyses 1-(9Z-octadecenoyl)-sn-glycero-3-phospho-L-serine + (9Z,12Z)-octadecadienoyl-CoA = 1-(9Z-octadecenoyl)-2-(9Z,12Z-octadienoyl)-sn-glycero-3-phospho-L-serine + CoA. It carries out the reaction 1-hexadecanoyl-sn-glycero-3-phospho-L-serine + (5Z,8Z,11Z,14Z)-eicosatetraenoyl-CoA = 1-hexadecanoyl-2-(5Z,8Z,11Z,14Z-eicosatetraenoyl)-sn-glycero-3-phospho-L-serine + CoA. It catalyses the reaction 1-(9Z-octadecenoyl)-sn-glycero-3-phospho-L-serine + (5Z,8Z,11Z,14Z)-eicosatetraenoyl-CoA = 1-(9Z-octadecenoyl)-2-(5Z,8Z,11Z,14Z-eicosatetraenoyl)-sn-glycero-3-phospho-L-serine + CoA. The protein operates within lipid metabolism; phospholipid metabolism. Its activity is regulated as follows. Activity is inhibited by thimerosal. In terms of biological role, lysophospholipid O-acyltransferase (LPLAT) that catalyzes the reacylation step of the phospholipid remodeling process also known as the Lands cycle. Catalyzes transfer of the fatty acyl chain from fatty acyl-CoA to 1-acyl lysophospholipid to form various classes of phospholipids. Converts 1-acyl lysophosphatidylcholine (LPC) into phosphatidylcholine (PC) (LPCAT activity), 1-acyl lysophosphatidylserine (LPS) into phosphatidylserine (PS) (LPSAT activity) and 1-acyl lysophosphatidylethanolamine (LPE) into phosphatidylethanolamine (PE) (LPEAT activity). Favors polyunsaturated fatty acyl-CoAs as acyl donors compared to saturated fatty acyl-CoAs. Has higher activity for LPC acyl acceptors compared to LPEs and LPSs. Can also transfer the fatty acyl chain from fatty acyl-CoA to 1-O-alkyl lysophospholipid or 1-O-alkenyl lysophospholipid with lower efficiency. Acts as a major LPC O-acyltransferase in liver and intestine. As a component of the liver X receptor/NR1H3 or NR1H2 signaling pathway, mainly catalyzes the incorporation of arachidonate into PCs of endoplasmic reticulum (ER) membranes, increasing membrane dynamics and enabling triacylglycerols transfer to nascent very low-density lipoprotein (VLDL) particles. Promotes processing of sterol regulatory protein SREBF1 in hepatocytes, likely by facilitating the translocation of SREBF1-SCAP complex from ER to the Golgi apparatus. Participates in mechanisms by which the liver X receptor/NR1H3 or NR1H2 signaling pathway counteracts lipid-induced ER stress response and inflammation. Down-regulates hepatic inflammation by limiting arachidonic acid availability for synthesis of inflammatory eicosanoids, such as prostaglandins. In enterocytes, acts as a component of a gut-brain feedback loop that coordinates dietary lipid absorption and food intake. Regulates the abundance of PCs containing linoleate and arachidonate in enterocyte membranes, enabling passive diffusion of fatty acids and cholesterol across the membrane for efficient chylomicron assembly. In the intestinal crypt, acts as a component of dietary-responsive phospholipid-cholesterol axis, regulating the biosynthesis of cholesterol and its mitogenic effects on intestinal stem cells. This Homo sapiens (Human) protein is Lysophospholipid acyltransferase 5 (LPCAT3).